We begin with the raw amino-acid sequence, 340 residues long: Probable dual-specificity RNA methyltransferase RlmN (340 aa).

Catalysis depends on E90, which acts as the Proton acceptor. Positions 97–325 (QVSRKTACLS…PVTRRYQRGN (229 aa)) constitute a Radical SAM core domain. The cysteines at positions 104 and 331 are disulfide-linked. C111, C115, and C118 together coordinate [4Fe-4S] cluster. Residues 157–158 (GE), S189, 212–214 (SLT), and N288 contribute to the S-adenosyl-L-methionine site. Catalysis depends on C331, which acts as the S-methylcysteine intermediate.

It belongs to the radical SAM superfamily. RlmN family. Requires [4Fe-4S] cluster as cofactor.

It localises to the cytoplasm. It catalyses the reaction adenosine(2503) in 23S rRNA + 2 reduced [2Fe-2S]-[ferredoxin] + 2 S-adenosyl-L-methionine = 2-methyladenosine(2503) in 23S rRNA + 5'-deoxyadenosine + L-methionine + 2 oxidized [2Fe-2S]-[ferredoxin] + S-adenosyl-L-homocysteine. It carries out the reaction adenosine(37) in tRNA + 2 reduced [2Fe-2S]-[ferredoxin] + 2 S-adenosyl-L-methionine = 2-methyladenosine(37) in tRNA + 5'-deoxyadenosine + L-methionine + 2 oxidized [2Fe-2S]-[ferredoxin] + S-adenosyl-L-homocysteine. Functionally, specifically methylates position 2 of adenine 2503 in 23S rRNA and position 2 of adenine 37 in tRNAs. This is Probable dual-specificity RNA methyltransferase RlmN from Treponema pallidum (strain Nichols).